An 82-amino-acid chain; its full sequence is Mitotic-spindle organizing protein 1 (82 aa).

The residue at position 2 (Ala-2) is an N-acetylalanine.

This sequence belongs to the MOZART1 family. Associates with the gamma-tubulin ring complex (gTuRC) consisting of TUBGCP2, TUBGCP3, TUBGCP4, TUBGCP5 and TUBGCP6 and gamma-tubulin TUBG1 or TUBG2; within the complex, interacts with TUBGCP3 and TUBGCP6 to form a luminal bridge with actin that stabilizes the initial structure during complex assembly. Interacts with TUBG1.

The protein resides in the cytoplasm. It localises to the cytoskeleton. The protein localises to the microtubule organizing center. Its subcellular location is the centrosome. It is found in the spindle. Its function is as follows. Required for the recruitment and the assembly of the gamma-tubulin ring complex (gTuRC) at the centrosome. The gTuRC regulates the minus-end nucleation of alpha-beta tubulin heterodimers that grow into microtubule protafilaments, a critical step in centrosome duplication and spindle formation. This chain is Mitotic-spindle organizing protein 1 (MZT1), found in Homo sapiens (Human).